The primary structure comprises 481 residues: UDP-glycosyltransferase 85A2 (481 aa).

UDP-alpha-D-glucose contacts are provided by residues serine 303, 360–362, 377–385, and 399–402; these read CPQ, HCGWNSTLE, and FAEQ.

It belongs to the UDP-glycosyltransferase family. Expressed in roots, shoots, leaves and flowers.

This Arabidopsis thaliana (Mouse-ear cress) protein is UDP-glycosyltransferase 85A2 (UGT85A2).